We begin with the raw amino-acid sequence, 437 residues long: Proline--tRNA ligase (437 aa).

This sequence belongs to the class-II aminoacyl-tRNA synthetase family. ProS type 2 subfamily. Homodimer.

It is found in the cytoplasm. It catalyses the reaction tRNA(Pro) + L-proline + ATP = L-prolyl-tRNA(Pro) + AMP + diphosphate. Functionally, catalyzes the attachment of proline to tRNA(Pro) in a two-step reaction: proline is first activated by ATP to form Pro-AMP and then transferred to the acceptor end of tRNA(Pro). The polypeptide is Proline--tRNA ligase (Acidiphilium cryptum (strain JF-5)).